We begin with the raw amino-acid sequence, 134 residues long: Methylglyoxal synthase (134 aa).

An MGS-like domain is found at 1-134; the sequence is MKIALIAHDR…DWRLIQERRN (134 aa). Substrate is bound by residues His8, Lys12, 34–37, and 54–55; these read TGTT and SG. The active-site Proton donor/acceptor is the Asp60. His87 contacts substrate.

It belongs to the methylglyoxal synthase family.

It carries out the reaction dihydroxyacetone phosphate = methylglyoxal + phosphate. In terms of biological role, catalyzes the formation of methylglyoxal from dihydroxyacetone phosphate. This Lysinibacillus sphaericus (strain C3-41) protein is Methylglyoxal synthase.